The sequence spans 144 residues: UPF0735 ACT domain-containing protein LSEI_1046 (144 aa).

The ACT domain occupies 68–143 (VISLMLHHDR…GVSDVHLVSV (76 aa)).

This sequence belongs to the UPF0735 family.

This is UPF0735 ACT domain-containing protein LSEI_1046 from Lacticaseibacillus paracasei (strain ATCC 334 / BCRC 17002 / CCUG 31169 / CIP 107868 / KCTC 3260 / NRRL B-441) (Lactobacillus paracasei).